The following is a 632-amino-acid chain: MSPSLNEPERLNRQAQGLACNECRARKLRCDRVRPTCGTCESLGVTCTPNSVRQPRGPRKGYLKTLQSRISALERQWNGQQKAAGGSPGESPPCSEGGQTLRAVSESTSDGVHDEDHANGARPPSSQSSIEQPILQPTVSLDGISALHGFAPVNSPFAFALPGTDPSKTVDLFSHMECFPSMPTKLDPRAYVPQQLTPNSTMSNGQFDLPTDLSVTSEFQLPELMKADLSHLYFDRVHPFAPILNKRRYFARAARPVSEQGAMTCLQHAMWTLAAWLGSQFKHIQKDLYIYTRGLLEKWELNMHPGNPPIELAQARLFLAIYEIMQVNYERGWLSAGRCFRLIQLMKLHEIDVPDGISESGISFGEIEERRRTFWMAYSLDRFINLINKMPLTLNEQVIFTRLPAPEGAFQRERPVQTQFLSEFMAGDDDLQIVSPFSACIVVMTISGRCLSHQQQCMVERAYGGMPQDFITRHQWLEGILMSKGKAIVDCISNDLDDELTDPMLLFTNMAAHATTLLLGMTMQTGLCNYESLISGFEERATEAAQKILHLCQRLNECGYFKVHPFTPIPLVFCAEWAQGRKNQNPAFEPLHNSMLCSLRDLSVVNMLAETCLARLNDSNPQMETDMSKSQS.

The zn(2)-C6 fungal-type DNA-binding region spans 20–47 (CNECRARKLRCDRVRPTCGTCESLGVTC). A disordered region spans residues 77–130 (WNGQQKAAGGSPGESPPCSEGGQTLRAVSESTSDGVHDEDHANGARPPSSQSSI).

Its subcellular location is the nucleus. Transcription factor that regulates the expression of the gene cluster that mediates the biosynthesis of azaterrilone A and other azaphilones, a class of fungal metabolites characterized by a highly oxygenated pyrano-quinone bicyclic core and exhibiting a broad range of bioactivities. The protein is Transcription factor tazR of Aspergillus terreus (strain NIH 2624 / FGSC A1156).